A 511-amino-acid polypeptide reads, in one-letter code: 2,3-bisphosphoglycerate-independent phosphoglycerate mutase (511 aa).

The Mn(2+) site is built by aspartate 14 and serine 64. The Phosphoserine intermediate role is filled by serine 64. Substrate-binding positions include histidine 125, 155-156, arginine 187, arginine 193, 259-262, and lysine 333; these read RD and RADR. Residues aspartate 400, histidine 404, aspartate 441, histidine 442, and histidine 460 each coordinate Mn(2+).

It belongs to the BPG-independent phosphoglycerate mutase family. Monomer. The cofactor is Mn(2+).

It catalyses the reaction (2R)-2-phosphoglycerate = (2R)-3-phosphoglycerate. Its pathway is carbohydrate degradation; glycolysis; pyruvate from D-glyceraldehyde 3-phosphate: step 3/5. Functionally, catalyzes the interconversion of 2-phosphoglycerate and 3-phosphoglycerate. This chain is 2,3-bisphosphoglycerate-independent phosphoglycerate mutase, found in Pseudomonas entomophila (strain L48).